We begin with the raw amino-acid sequence, 432 residues long: D-amino acid dehydrogenase (432 aa).

Position 3 to 17 (3 to 17 (VVILGSGVVGVASAW)) interacts with FAD.

Belongs to the DadA oxidoreductase family. Requires FAD as cofactor.

It carries out the reaction a D-alpha-amino acid + A + H2O = a 2-oxocarboxylate + AH2 + NH4(+). It participates in amino-acid degradation; D-alanine degradation; NH(3) and pyruvate from D-alanine: step 1/1. Functionally, oxidative deamination of D-amino acids. This is D-amino acid dehydrogenase from Klebsiella pneumoniae (strain 342).